We begin with the raw amino-acid sequence, 412 residues long: MISQIDKTELLERFLHYVSFHTQSKPNAKHSPSSVGQMKLAMQLQKELIQFGLENVEVSKYAVVTAFLPANDPNLTKTIGLVAHLDTSPQCSGKNVRLEVIEEYRGGDIALGIGEEFISPVYYSFMQKLVGQTLIVTDGTTLLGADNKAGIAEIMTALSILQKENIPHCNIRVAFTPDEEIGLGIHYFPMEKFSCDWAYTIDGGEVGELEYENFNAATAKVRFFGRNIHTGYAKGKMLNALTLACEFQQVFPVDEVPEKTDGKAGFYHLEDFFGDIEQVELTYLIRDFDEQNFAQRKAFIKNQVEKFNAKKGLKKPIELEIQDSYQNMYDVVKNVPQSIELADRAMKAVGIKPNHKPIRGGTDGAFLASKGLACPNIFTGGYNFHSKHELVSLQGMENTVQVIIEMLKCKDL.

Residue His-84 participates in Zn(2+) binding. Residue Asp-86 is part of the active site. Zn(2+) is bound at residue Asp-146. Residue Glu-179 is the Proton acceptor of the active site. Zn(2+) is bound by residues Glu-180, Asp-202, and His-385.

It belongs to the peptidase M20B family. Requires Zn(2+) as cofactor.

It localises to the cytoplasm. The enzyme catalyses Release of the N-terminal residue from a tripeptide.. Its function is as follows. Cleaves the N-terminal amino acid of tripeptides. This chain is Peptidase T, found in Haemophilus influenzae (strain PittEE).